Consider the following 467-residue polypeptide: Spermatogenesis- and oogenesis-specific basic helix-loop-helix-containing protein 2 (467 aa).

A bHLH domain is found at 200-251 (QASFLHSTKEKLRRERIKSCCEQLRTLLPYVKGRKSDVASVIEATVDYVKQV). Residues 443 to 453 (ASASDHQASQP) show a composition bias toward low complexity. A disordered region spans residues 443 to 467 (ASASDHQASQPPALPSPQPHDSSYF).

As to quaternary structure, forms both hetero- and homodimers with SOHLH1. As to expression, preferentially expressed in the adult ovary and testis. Expressed in the majority of spermatogonia in adult animals, but not in the most undifferentiated spermatogonial population.

The protein resides in the nucleus. It localises to the cytoplasm. Transcription regulator of both male and female germline differentiation. Suppresses genes involved in spermatogonial stem cells maintenance, and induces genes important for spermatogonial differentiation. Coordinates oocyte differentiation without affecting meiosis I. The chain is Spermatogenesis- and oogenesis-specific basic helix-loop-helix-containing protein 2 (Sohlh2) from Mus musculus (Mouse).